A 245-amino-acid polypeptide reads, in one-letter code: Pyridoxine 5'-phosphate synthase (245 aa).

Position 7 (N7) interacts with 3-amino-2-oxopropyl phosphate. 9-10 (DH) contacts 1-deoxy-D-xylulose 5-phosphate. R18 contributes to the 3-amino-2-oxopropyl phosphate binding site. The active-site Proton acceptor is H43. Residues R45 and H50 each coordinate 1-deoxy-D-xylulose 5-phosphate. E70 acts as the Proton acceptor in catalysis. Residue T100 participates in 1-deoxy-D-xylulose 5-phosphate binding. H190 functions as the Proton donor in the catalytic mechanism. 3-amino-2-oxopropyl phosphate-binding positions include G191 and 212–213 (GH).

Belongs to the PNP synthase family. As to quaternary structure, homooctamer; tetramer of dimers.

It is found in the cytoplasm. It carries out the reaction 3-amino-2-oxopropyl phosphate + 1-deoxy-D-xylulose 5-phosphate = pyridoxine 5'-phosphate + phosphate + 2 H2O + H(+). The protein operates within cofactor biosynthesis; pyridoxine 5'-phosphate biosynthesis; pyridoxine 5'-phosphate from D-erythrose 4-phosphate: step 5/5. Its function is as follows. Catalyzes the complicated ring closure reaction between the two acyclic compounds 1-deoxy-D-xylulose-5-phosphate (DXP) and 3-amino-2-oxopropyl phosphate (1-amino-acetone-3-phosphate or AAP) to form pyridoxine 5'-phosphate (PNP) and inorganic phosphate. The polypeptide is Pyridoxine 5'-phosphate synthase (Prochlorococcus marinus (strain NATL2A)).